The primary structure comprises 409 residues: Phospholipase ABHD3 (409 aa).

Residues 26–46 (GFFGSGVGLSLILGFSVAYAF) traverse the membrane as a helical; Signal-anchor for type II membrane protein segment. Positions 140-233 (PTILLLPGLT…MLLLNYLGKI (94 aa)) constitute an AB hydrolase-1 domain. Residues S220, D346, and H375 each act as charge relay system in the active site.

This sequence belongs to the AB hydrolase superfamily. AB hydrolase 4 family.

The protein localises to the membrane. It carries out the reaction a 1,2-diacyl-sn-glycero-3-phosphocholine + H2O = a 1-acyl-sn-glycero-3-phosphocholine + a fatty acid + H(+). The catalysed reaction is a 1,2-diacyl-sn-glycero-3-phosphocholine + H2O = a 2-acyl-sn-glycero-3-phosphocholine + a fatty acid + H(+). It catalyses the reaction 1-tetradecanoyl-2-(9Z,12Z-octadecadienoyl)-sn-glycero-3-phosphocholine + H2O = 2-(9Z,12Z-octadecadienoyl)-sn-glycero-3-phosphocholine + tetradecanoate + H(+). The enzyme catalyses 1-tetradecanoyl-2-(9Z,12Z-octadecadienoyl)-sn-glycero-3-phosphocholine + H2O = 1-tetradecanoyl-sn-glycero-3-phosphocholine + (9Z,12Z)-octadecadienoate + H(+). It carries out the reaction 1-tetradecanoyl-2-(5Z,8Z,11Z,14Z-eicosatetraenoyl)-sn-glycero-3-phosphocholine + H2O = 2-(5Z,8Z,11Z,14Z)-eicosatetraenoyl-sn-glycero-3-phosphocholine + tetradecanoate + H(+). The catalysed reaction is 1-tetradecanoyl-2-(4Z,7Z,10Z,13Z,16Z,19Z-docosahexaenoyl)-sn-glycero-3-phosphocholine + H2O = 2-(4Z,7Z,10Z,13Z,16Z,19Z-docosahexaenoyl)-sn-glycero-3-phosphocholine + tetradecanoate + H(+). It catalyses the reaction 1,2-ditetradecanoyl-sn-glycero-3-phosphocholine + H2O = 2-tetradecanoyl-sn-glycero-3-phosphocholine + tetradecanoate + H(+). The enzyme catalyses 1-octadecanoyl-2-acetyl-sn-glycero-3-phosphocholine + H2O = 1-octadecanoyl-sn-glycero-3-phosphocholine + acetate + H(+). It carries out the reaction 1,2-ditetradecanoyl-sn-glycero-3-phosphocholine + H2O = 1-tetradecanoyl-sn-glycero-3-phosphocholine + tetradecanoate + H(+). The catalysed reaction is 1-octadecanoyl-2-pentanoyl-sn-glycero-3-phosphocholine + H2O = pentanoate + 1-octadecanoyl-sn-glycero-3-phosphocholine + H(+). It catalyses the reaction 1-octadecanoyl-2-hexanoyl-sn-glycero-3-phosphocholine + H2O = hexanoate + 1-octadecanoyl-sn-glycero-3-phosphocholine + H(+). The enzyme catalyses 1-octadecanoyl-2-octanoyl-sn-glycero-3-phosphocholine + H2O = 1-octadecanoyl-sn-glycero-3-phosphocholine + octanoate + H(+). It carries out the reaction 1-octadecanoyl-2-nonanoyl-sn-glycero-3-phosphocholine + H2O = nonanoate + 1-octadecanoyl-sn-glycero-3-phosphocholine + H(+). The catalysed reaction is 1-O-hexadecyl-2-nonadioyl-sn-glycero-3-phosphocholine + H2O = nonanedioate + 1-O-hexadecyl-sn-glycero-3-phosphocholine + H(+). It catalyses the reaction 1-hexadecanoyl-2-nonadioyl-sn-glycero-3-phosphocholine + H2O = nonanedioate + 1-hexadecanoyl-sn-glycero-3-phosphocholine + H(+). The enzyme catalyses 1-hexadecanoyl-2-(9-oxononanoyl)-sn-glycero-3-phosphocholine + H2O = 9-oxononanoate + 1-hexadecanoyl-sn-glycero-3-phosphocholine + H(+). It carries out the reaction 1-hexadecanoyl-2-(5-oxopentanoyl)-sn-glycero-3-phosphocholine + H2O = 5-oxopentanoate + 1-hexadecanoyl-sn-glycero-3-phosphocholine + H(+). The catalysed reaction is 1-hexadecanoyl-2-glutaroyl-sn-glycero-3-phosphocholine + H2O = glutarate + 1-hexadecanoyl-sn-glycero-3-phosphocholine + H(+). It catalyses the reaction 1-O-hexadecyl-2-acetyl-sn-glycero-3-phosphocholine + H2O = 1-O-hexadecyl-sn-glycero-3-phosphocholine + acetate + H(+). Functionally, phospholipase that may play a role in phospholipids remodeling. May selectively cleave myristate (C14)-containing phosphatidylcholines through its predominant phospholipase 1 activity, cleaving preferentially acyl groups in sn1 position. In parallel, may have a minor phospholipase 2 activity acting on acyl groups in position sn2. In addition to (C14)-containing phosphatidylcholines, may also act on other medium-chain-containing and oxidatively truncated phospholipids. This chain is Phospholipase ABHD3, found in Homo sapiens (Human).